Reading from the N-terminus, the 76-residue chain is uncharacterized protein (76 aa).

The protein belongs to the IIV-6 342R family.

This is an uncharacterized protein from Invertebrate iridescent virus 3 (IIV-3).